A 411-amino-acid chain; its full sequence is ACT domain-containing protein ACR9 (411 aa).

ACT domains lie at Val22–Lys105, Leu111–Pro194, and Leu243–Val322.

Its function is as follows. May bind amino acids. The protein is ACT domain-containing protein ACR9 of Arabidopsis thaliana (Mouse-ear cress).